Consider the following 633-residue polypeptide: Ankyrin repeat and SOCS box protein 2 (633 aa).

Residues 26 to 45 (SEDELVQMAIEQSLADKTRG) enclose the UIM domain. ANK repeat units follow at residues 102–131 (APVD…NLSE), 135–165 (EGWL…VIDQ), 169–198 (QEET…EPDI), 202–231 (SRET…DTNH), 235–264 (RGWT…KVEA), 268–297 (YGIT…DINT), 301–330 (DSAS…DANK), 334–363 (DGML…RTRV), 366–395 (SGIS…DVNA), 408–437 (RRSS…DPNR), 438–467 (DVIN…NIDA), and 474–502 (TAFP…NGEP). A Phosphoserine modification is found at Ser369. The SOCS box domain occupies 579–633 (EDWAVIKEKAEPPRPLAHLCRLRVRKAIGKYRIKLLDTLPLPGRLIRYLKYENTQ).

It belongs to the ankyrin SOCS box (ASB) family. As to quaternary structure, component of a probable ECS E3 ubiquitin-protein ligase complex which contains CUL5, either RBX1 or RNF7/RBX2, Elongin BC complex (ELOB and ELOC) and ASB2. Interacts with SKP2. Through its interaction with SKP2, likely to bridge the formation of dimeric E3-ubiquitin-protein ligase complexes composed of an ECS complex and an SCF(SKP2) complex. Interacts with JAK2; the interaction targets JAK2 for Notch-mediated proteasomal degradation. Interacts with TCF3/E2A; the interaction is mediated by SKP2 and targets TCF3 for Notch-mediated proteasomal degradation. Interacts with DES. Monoubiquitinated.

Its subcellular location is the cytoplasm. It localises to the cytoskeleton. The protein resides in the stress fiber. It is found in the myofibril. The protein localises to the sarcomere. Its subcellular location is the z line. The protein operates within protein modification; protein ubiquitination. Substrate-recognition component of a SCF-like ECS (Elongin-Cullin-SOCS-box protein) E3 ubiquitin-protein ligase complex which mediates the ubiquitination and subsequent proteasomal degradation of target proteins. Mediates Notch-induced ubiquitination and degradation of substrates including E2A and JAK2. Required during embryonic heart development for complete heart looping. Required for cardiomyocyte differentiation. Involved in myogenic differentiation and targets filamin FLNB for proteasomal degradation but not filamin FLNA. Also targets DES for proteasomal degradation. Acts as a negative regulator of skeletal muscle mass. The chain is Ankyrin repeat and SOCS box protein 2 from Bos taurus (Bovine).